The following is a 152-amino-acid chain: 3-dehydroquinate dehydratase (152 aa).

Tyr26 acts as the Proton acceptor in catalysis. Substrate is bound by residues Asn77, His83, and Asp90. His103 serves as the catalytic Proton donor. Substrate contacts are provided by residues 104-105 (LS) and Arg114.

This sequence belongs to the type-II 3-dehydroquinase family. In terms of assembly, homododecamer.

It carries out the reaction 3-dehydroquinate = 3-dehydroshikimate + H2O. The protein operates within metabolic intermediate biosynthesis; chorismate biosynthesis; chorismate from D-erythrose 4-phosphate and phosphoenolpyruvate: step 3/7. Functionally, catalyzes a trans-dehydration via an enolate intermediate. The sequence is that of 3-dehydroquinate dehydratase from Tolumonas auensis (strain DSM 9187 / NBRC 110442 / TA 4).